Reading from the N-terminus, the 321-residue chain is Beta-1,3-N-acetylglucosaminyltransferase manic fringe (321 aa).

Over 1-7 (MQCRLPR) the chain is Cytoplasmic. A helical; Signal-anchor for type II membrane protein transmembrane segment spans residues 8 to 27 (GLAGALLTLLCMGLLCLRYH). Topologically, residues 28-321 (LNLSPQRVQE…TPWCPQLGAR (294 aa)) are lumenal. R70 serves as a coordination point for substrate. An N-linked (GlcNAc...) asparagine glycan is attached at N109. Intrachain disulfides connect C110–C121 and C139–C202. Position 143 (D143) interacts with substrate. Mn(2+) is bound at residue D144. Residue N185 is glycosylated (N-linked (GlcNAc...) asparagine). The active site involves D232. H256 is a Mn(2+) binding site. C306 and C315 are joined by a disulfide.

The protein belongs to the glycosyltransferase 31 family. It depends on Mn(2+) as a cofactor.

Its subcellular location is the golgi apparatus membrane. The enzyme catalyses 3-O-(alpha-L-fucosyl)-L-threonyl-[EGF-like domain protein] + UDP-N-acetyl-alpha-D-glucosamine = 3-O-(N-acetyl-beta-D-glucosaminyl-(1-&gt;3)-alpha-L-fucosyl)-L-threonyl-[EGF-like domain protein] + UDP + H(+). The catalysed reaction is 3-O-(alpha-L-fucosyl)-L-seryl-[EGF-like domain protein] + UDP-N-acetyl-alpha-D-glucosamine = 3-O-(N-acetyl-beta-D-glucosaminyl-(1-&gt;3)-alpha-L-fucosyl)-L-seryl-[EGF-like domain protein] + UDP + H(+). In terms of biological role, glycosyltransferase that initiates the elongation of O-linked fucose residues attached to EGF-like repeats in the extracellular domain of Notch molecules. Modulates NOTCH1 activity by modifying O-fucose residues at specific EGF-like domains resulting in inhibition of NOTCH1 activation by JAG1 and enhancement of NOTCH1 activation by DLL1 via an increase in its binding to DLL1. The chain is Beta-1,3-N-acetylglucosaminyltransferase manic fringe (MFNG) from Pan troglodytes (Chimpanzee).